Consider the following 147-residue polypeptide: Hemoglobin subunit epsilon (147 aa).

Positions His3–His147 constitute a Globin domain. Phosphoserine occurs at positions 14 and 51. 2 residues coordinate heme b: His64 and His93.

Belongs to the globin family. In terms of assembly, heterotetramer of two alpha chains and two epsilon chains in early embryonic hemoglobin Gower-2; two zeta chains and two epsilon chains in early embryonic hemoglobin Gower-1. In terms of tissue distribution, red blood cells.

In terms of biological role, the epsilon chain is a beta-type chain of early mammalian embryonic hemoglobin. This Bradypus tridactylus (Pale-throated three-toed sloth) protein is Hemoglobin subunit epsilon (HBE1).